Reading from the N-terminus, the 73-residue chain is Large ribosomal subunit protein bL31 (73 aa).

This sequence belongs to the bacterial ribosomal protein bL31 family. Type A subfamily. Part of the 50S ribosomal subunit.

Binds the 23S rRNA. In Rhizobium johnstonii (strain DSM 114642 / LMG 32736 / 3841) (Rhizobium leguminosarum bv. viciae), this protein is Large ribosomal subunit protein bL31.